Consider the following 100-residue polypeptide: Small ribosomal subunit protein bS6 (100 aa).

The protein belongs to the bacterial ribosomal protein bS6 family.

Binds together with bS18 to 16S ribosomal RNA. This chain is Small ribosomal subunit protein bS6, found in Enterococcus faecalis (strain ATCC 700802 / V583).